Here is a 101-residue protein sequence, read N- to C-terminus: Small ribosomal subunit protein uS14 (101 aa).

This sequence belongs to the universal ribosomal protein uS14 family. In terms of assembly, part of the 30S ribosomal subunit. Contacts proteins S3 and S10.

In terms of biological role, binds 16S rRNA, required for the assembly of 30S particles and may also be responsible for determining the conformation of the 16S rRNA at the A site. This chain is Small ribosomal subunit protein uS14, found in Saccharophagus degradans (strain 2-40 / ATCC 43961 / DSM 17024).